Reading from the N-terminus, the 1312-residue chain is uncharacterized protein (1312 aa).

The signal sequence occupies residues 1–20; that stretch reads MRNNLIYTMFLSCLHFETFC. A compositionally biased stretch (low complexity) spans 299 to 344; sequence TTTSSSTMLSSTTLLTTETETRESSSTGSTQTTTPSTEPSTTITTP. 8 disordered regions span residues 299 to 503, 565 to 609, 645 to 692, 749 to 775, 812 to 864, 899 to 942, 1048 to 1079, and 1114 to 1165; these read TTTS…TTTY, EITS…PTGG, KETR…PTGG, SSSSKFSITPTPTPSSGTTTYNWPTGG, KTRT…GGTT, KTRT…PTGG, KTRTETTSDAQGCKATSTTQTPTTFNWPTGGT, and NTTR…TLET. Over residues 345-357 the composition is skewed to polar residues; that stretch reads MEQSSTVSSVQKT. Positions 365–503 are enriched in low complexity; it reads SSSTTVPTSA…STPATPTTTY (139 aa). Residues 565–574 show a composition bias toward basic and acidic residues; it reads EITSDAEGCK. Over residues 576-609 the composition is skewed to low complexity; sequence TSSTPTPSSTSVHSTTATPSTTPGTTTYNWPTGG. The segment covering 645 to 659 has biased composition (basic and acidic residues); it reads KETRTETTTDADGCK. The span at 660-692 shows a compositional bias: low complexity; the sequence is KTSSTSSSTPSLKHSTTPTPTPGTTTYNWPTGG. Positions 813–825 are enriched in basic and acidic residues; that stretch reads TRTETTTDAEGCK. Residues 826–864 show a composition bias toward low complexity; the sequence is KTSSTSKISTTPTSPTSSKPTPTSTSMTTTYNWPTGGTT. A compositionally biased stretch (polar residues) spans 899-908; sequence KTRTETTTDA. Over residues 914–942 the composition is skewed to low complexity; the sequence is TSSTSLKPTSPSSSTASPPTTTYNWPTGG. Residues 1048–1057 are compositionally biased toward polar residues; the sequence is KTRTETTSDA. Over residues 1063–1076 the composition is skewed to low complexity; the sequence is TSTTQTPTTFNWPT. A compositionally biased stretch (polar residues) spans 1114-1123; it reads NTTRTETTSD. Over residues 1130-1154 the composition is skewed to low complexity; the sequence is TSSGTTSTMSPGTTGGTTVSRTTNS. Polar residues predominate over residues 1155 to 1164; sequence NNPIDSSTLE. The Sushi domain occupies 1239-1306; that stretch reads ATCSSLNLNL…WSGTPEKCVA (68 aa). 2 cysteine pairs are disulfide-bonded: cysteine 1241–cysteine 1291 and cysteine 1273–cysteine 1304.

The protein localises to the secreted. This is an uncharacterized protein from Caenorhabditis elegans.